We begin with the raw amino-acid sequence, 287 residues long: Probable endonuclease 4 (287 aa).

Zn(2+)-binding residues include His-69, His-109, Glu-144, Asp-178, His-181, His-215, Asp-228, His-230, and Glu-260.

It belongs to the AP endonuclease 2 family. It depends on Zn(2+) as a cofactor.

The catalysed reaction is Endonucleolytic cleavage to 5'-phosphooligonucleotide end-products.. Its function is as follows. Endonuclease IV plays a role in DNA repair. It cleaves phosphodiester bonds at apurinic or apyrimidinic (AP) sites, generating a 3'-hydroxyl group and a 5'-terminal sugar phosphate. This is Probable endonuclease 4 from Thermotoga petrophila (strain ATCC BAA-488 / DSM 13995 / JCM 10881 / RKU-1).